The chain runs to 314 residues: tRNA dimethylallyltransferase (314 aa).

Residue 14–21 (GPTASGKT) coordinates ATP. Position 16-21 (16-21 (TASGKT)) interacts with substrate. Interaction with substrate tRNA regions lie at residues 39 to 42 (DSAQ), 163 to 167 (QRLQR), and 245 to 250 (RCVGYR).

The protein belongs to the IPP transferase family. Monomer. It depends on Mg(2+) as a cofactor.

The enzyme catalyses adenosine(37) in tRNA + dimethylallyl diphosphate = N(6)-dimethylallyladenosine(37) in tRNA + diphosphate. In terms of biological role, catalyzes the transfer of a dimethylallyl group onto the adenine at position 37 in tRNAs that read codons beginning with uridine, leading to the formation of N6-(dimethylallyl)adenosine (i(6)A). This chain is tRNA dimethylallyltransferase, found in Dechloromonas aromatica (strain RCB).